The primary structure comprises 274 residues: Probable cyclic nucleotide phosphodiesterase RPA0124 (274 aa).

Positions 8, 10, 49, 79, 155, 194, and 196 each coordinate Fe cation. Residues His-10, Asp-49, and 79-80 (NH) contribute to the AMP site. His-196 contributes to the AMP binding site.

The protein belongs to the cyclic nucleotide phosphodiesterase class-III family. It depends on Fe(2+) as a cofactor.

The polypeptide is Probable cyclic nucleotide phosphodiesterase RPA0124 (Rhodopseudomonas palustris (strain ATCC BAA-98 / CGA009)).